Consider the following 37-residue polypeptide: Bactericidin B-3 (37 aa).

G37 is subject to Glycine amide.

It belongs to the cecropin family.

It localises to the secreted. In terms of biological role, cecropins have lytic and antibacterial activity against several Gram-positive and Gram-negative bacteria. This is Bactericidin B-3 from Manduca sexta (Tobacco hawkmoth).